Reading from the N-terminus, the 109-residue chain is Parvalbumin beta-1 (109 aa).

The residue at position 2 (S2) is an N-acetylserine. 2 EF-hand domains span residues K39–G74 and L78–A109. Ca(2+) is bound by residues D52, D54, S56, F58, E60, E63, D91, D93, D95, M97, and E102.

The protein belongs to the parvalbumin family.

In terms of biological role, in muscle, parvalbumin is thought to be involved in relaxation after contraction. It binds two calcium ions. This is Parvalbumin beta-1 from Gadus chalcogrammus (Alaska pollock).